A 163-amino-acid chain; its full sequence is Nucleotide-binding protein Dvul_1191 (163 aa).

The protein belongs to the YajQ family.

Functionally, nucleotide-binding protein. The polypeptide is Nucleotide-binding protein Dvul_1191 (Nitratidesulfovibrio vulgaris (strain DP4) (Desulfovibrio vulgaris)).